Reading from the N-terminus, the 555-residue chain is uncharacterized protein (555 aa).

The N-terminal stretch at 1–28 (MRSGLFGVLRWTAVGLVATLVASLALTA) is a signal peptide. Cysteine 29 carries the N-palmitoyl cysteine lipid modification. A lipid anchor (S-diacylglycerol cysteine) is attached at cysteine 29.

This sequence to M.tuberculosis Rv2585c and M.bovis Mb2616c.

It localises to the cell membrane. This is an uncharacterized protein from Mycobacterium leprae (strain TN).